The sequence spans 430 residues: Gamma-glutamyl phosphate reductase (430 aa).

The protein belongs to the gamma-glutamyl phosphate reductase family.

The protein localises to the cytoplasm. The enzyme catalyses L-glutamate 5-semialdehyde + phosphate + NADP(+) = L-glutamyl 5-phosphate + NADPH + H(+). The protein operates within amino-acid biosynthesis; L-proline biosynthesis; L-glutamate 5-semialdehyde from L-glutamate: step 2/2. Functionally, catalyzes the NADPH-dependent reduction of L-glutamate 5-phosphate into L-glutamate 5-semialdehyde and phosphate. The product spontaneously undergoes cyclization to form 1-pyrroline-5-carboxylate. This Rhodopseudomonas palustris (strain BisB5) protein is Gamma-glutamyl phosphate reductase.